Here is a 430-residue protein sequence, read N- to C-terminus: Tol-Pal system protein TolB (430 aa).

An N-terminal signal peptide occupies residues 1 to 21 (MKQAFRLMVGLLVLWASVLHA).

This sequence belongs to the TolB family. The Tol-Pal system is composed of five core proteins: the inner membrane proteins TolA, TolQ and TolR, the periplasmic protein TolB and the outer membrane protein Pal. They form a network linking the inner and outer membranes and the peptidoglycan layer.

The protein localises to the periplasm. In terms of biological role, part of the Tol-Pal system, which plays a role in outer membrane invagination during cell division and is important for maintaining outer membrane integrity. TolB occupies a key intermediary position in the Tol-Pal system because it communicates directly with both membrane-embedded components, Pal in the outer membrane and TolA in the inner membrane. This is Tol-Pal system protein TolB from Edwardsiella ictaluri (strain 93-146).